Consider the following 378-residue polypeptide: Poly(3-hydroxyalkanoate) polymerase subunit PhaC (378 aa).

Residues 84–356 (PVLIVYALVN…QSFPVGHIGM (273 aa)) form the AB hydrolase-1 domain.

The protein belongs to the PHA/PHB synthase family. Type III PhaC subfamily. Forms a heterodimer with PhaE, which may multimerize in the presence of 3-hydroxybutyryl-CoA. Both subunits are required for PHB synthesis in E.coli and in PHA-negative A.eutrophus.

The protein localises to the cytoplasm. It carries out the reaction (3R)-3-hydroxybutanoyl-CoA + [(3R)-hydroxybutanoate](n) = [(3R)-hydroxybutanoate](n+1) + CoA. Its pathway is biopolymer metabolism; poly-(R)-3-hydroxybutanoate biosynthesis. Functionally, when expressed in E.coli with Synechocystis PhaE and C.necator PhaA and PhaB, confers the ability to synthesize up to 13% (w/w) poly(3-hydroxybutyrate) (PHB) depending on the carbon source; all 4 genes are necessary for PHB production. Cell-free in vitro coexpression with PhaE gives a heterodimer able to polymerize 3-hydroxybutyrate-CoA. This Synechocystis sp. (strain ATCC 27184 / PCC 6803 / Kazusa) protein is Poly(3-hydroxyalkanoate) polymerase subunit PhaC.